The primary structure comprises 255 residues: Small ribosomal subunit protein uS2 (255 aa).

The interval 231–255 (RLQTGAEEEFSTEGEEVVEETPAEA) is disordered. A compositionally biased stretch (acidic residues) spans 236–255 (AEEEFSTEGEEVVEETPAEA).

Belongs to the universal ribosomal protein uS2 family.

The polypeptide is Small ribosomal subunit protein uS2 (Geobacter sp. (strain M21)).